We begin with the raw amino-acid sequence, 299 residues long: Probable arylamine N-acetyltransferase 2 (299 aa).

C75 acts as the Acyl-thioester intermediate in catalysis. Residues H115 and D130 contribute to the active site.

This sequence belongs to the arylamine N-acetyltransferase family.

It carries out the reaction an arylamine + acetyl-CoA = an N-acetylarylamine + CoA. The protein is Probable arylamine N-acetyltransferase 2 of Dictyostelium discoideum (Social amoeba).